Here is a 175-residue protein sequence, read N- to C-terminus: NADH-quinone oxidoreductase subunit I (175 aa).

4Fe-4S ferredoxin-type domains lie at K69 to A98 and K115 to P144. 8 residues coordinate [4Fe-4S] cluster: C78, C81, C84, C88, C124, C127, C130, and C134.

It belongs to the complex I 23 kDa subunit family. In terms of assembly, NDH-1 is composed of 14 different subunits. Subunits NuoA, H, J, K, L, M, N constitute the membrane sector of the complex. [4Fe-4S] cluster serves as cofactor.

It is found in the cell inner membrane. It carries out the reaction a quinone + NADH + 5 H(+)(in) = a quinol + NAD(+) + 4 H(+)(out). NDH-1 shuttles electrons from NADH, via FMN and iron-sulfur (Fe-S) centers, to quinones in the respiratory chain. The immediate electron acceptor for the enzyme in this species is believed to be ubiquinone. Couples the redox reaction to proton translocation (for every two electrons transferred, four hydrogen ions are translocated across the cytoplasmic membrane), and thus conserves the redox energy in a proton gradient. In Leptospira interrogans serogroup Icterohaemorrhagiae serovar Lai (strain 56601), this protein is NADH-quinone oxidoreductase subunit I.